Reading from the N-terminus, the 467-residue chain is Uronate isomerase (467 aa).

It belongs to the metallo-dependent hydrolases superfamily. Uronate isomerase family.

The catalysed reaction is D-glucuronate = D-fructuronate. The enzyme catalyses aldehydo-D-galacturonate = keto-D-tagaturonate. The protein operates within carbohydrate metabolism; pentose and glucuronate interconversion. The protein is Uronate isomerase of Clostridium acetobutylicum (strain ATCC 824 / DSM 792 / JCM 1419 / IAM 19013 / LMG 5710 / NBRC 13948 / NRRL B-527 / VKM B-1787 / 2291 / W).